A 417-amino-acid polypeptide reads, in one-letter code: MFSKQDQIQGYDDALLAAMNAEEQRQEDHIELIASENYTSKRVMQAQGSGLTNKYAEGYPGKRYYGGCEHVDKVEALAIERAKQLFGADYANVQPHSGSSANGAVYLALLQAGDTILGMSLAHGGHLTHGAKVSSSGKLYNAVQYGIDTNTGLIDYDEVERLAVEHKPKMIVAGFSAYSKTLDFPRFRAIADKVGALLFVDMAHVAGLVAAGLYPNPIPFADVVTTTTHKTLRGPRGGLILAKSNEEIEKKLNAAVFPGAQGGPLMHVIAAKAVCFKEALEPGFKAYQQQVIENAQAMAQVFIDRGYDVVSGGTDNHLFLVSLIRQGLTGKDADAALGRAHITVNKNAVPNDPQSPFVTSGLRIGTPAVTTRGFKVAQCVALAGWICDILDNLGDADVEADVAKNVAALCADFPVYR.

Residues Leu-121 and 125–127 (GHL) contribute to the (6S)-5,6,7,8-tetrahydrofolate site. An N6-(pyridoxal phosphate)lysine modification is found at Lys-230. 355–357 (SPF) contacts (6S)-5,6,7,8-tetrahydrofolate.

Belongs to the SHMT family. Homodimer. Pyridoxal 5'-phosphate serves as cofactor.

It localises to the cytoplasm. It carries out the reaction (6R)-5,10-methylene-5,6,7,8-tetrahydrofolate + glycine + H2O = (6S)-5,6,7,8-tetrahydrofolate + L-serine. The protein operates within one-carbon metabolism; tetrahydrofolate interconversion. It participates in amino-acid biosynthesis; glycine biosynthesis; glycine from L-serine: step 1/1. Functionally, catalyzes the reversible interconversion of serine and glycine with tetrahydrofolate (THF) serving as the one-carbon carrier. This reaction serves as the major source of one-carbon groups required for the biosynthesis of purines, thymidylate, methionine, and other important biomolecules. Also exhibits THF-independent aldolase activity toward beta-hydroxyamino acids, producing glycine and aldehydes, via a retro-aldol mechanism. The protein is Serine hydroxymethyltransferase 1 of Pseudomonas putida (strain ATCC 47054 / DSM 6125 / CFBP 8728 / NCIMB 11950 / KT2440).